Here is a 236-residue protein sequence, read N- to C-terminus: Phosphoribosylaminoimidazole-succinocarboxamide synthase (236 aa).

The protein belongs to the SAICAR synthetase family.

It catalyses the reaction 5-amino-1-(5-phospho-D-ribosyl)imidazole-4-carboxylate + L-aspartate + ATP = (2S)-2-[5-amino-1-(5-phospho-beta-D-ribosyl)imidazole-4-carboxamido]succinate + ADP + phosphate + 2 H(+). It participates in purine metabolism; IMP biosynthesis via de novo pathway; 5-amino-1-(5-phospho-D-ribosyl)imidazole-4-carboxamide from 5-amino-1-(5-phospho-D-ribosyl)imidazole-4-carboxylate: step 1/2. This is Phosphoribosylaminoimidazole-succinocarboxamide synthase from Rickettsia massiliae (strain Mtu5).